Consider the following 443-residue polypeptide: Na(+)-translocating NADH-quinone reductase subunit A (443 aa).

It belongs to the NqrA family. In terms of assembly, composed of six subunits; NqrA, NqrB, NqrC, NqrD, NqrE and NqrF.

The enzyme catalyses a ubiquinone + n Na(+)(in) + NADH + H(+) = a ubiquinol + n Na(+)(out) + NAD(+). Functionally, NQR complex catalyzes the reduction of ubiquinone-1 to ubiquinol by two successive reactions, coupled with the transport of Na(+) ions from the cytoplasm to the periplasm. NqrA to NqrE are probably involved in the second step, the conversion of ubisemiquinone to ubiquinol. This Actinobacillus succinogenes (strain ATCC 55618 / DSM 22257 / CCUG 43843 / 130Z) protein is Na(+)-translocating NADH-quinone reductase subunit A.